Here is a 279-residue protein sequence, read N- to C-terminus: Energy-coupling factor transporter ATP-binding protein EcfA1 (279 aa).

The ABC transporter domain maps to 6-240; it reads VEFRNVSFRY…KDALREIGLD (235 aa). 40–47 serves as a coordination point for ATP; it reads GHNGSGKS.

This sequence belongs to the ABC transporter superfamily. Energy-coupling factor EcfA family. As to quaternary structure, forms a stable energy-coupling factor (ECF) transporter complex composed of 2 membrane-embedded substrate-binding proteins (S component), 2 ATP-binding proteins (A component) and 2 transmembrane proteins (T component).

The protein localises to the cell membrane. In terms of biological role, ATP-binding (A) component of a common energy-coupling factor (ECF) ABC-transporter complex. Unlike classic ABC transporters this ECF transporter provides the energy necessary to transport a number of different substrates. The protein is Energy-coupling factor transporter ATP-binding protein EcfA1 of Oceanobacillus iheyensis (strain DSM 14371 / CIP 107618 / JCM 11309 / KCTC 3954 / HTE831).